Consider the following 147-residue polypeptide: Leech anti-platelet protein (147 aa).

An N-terminal signal peptide occupies residues 1–21 (MNSFLFSLACSLLVAIPAISA). Positions 21–71 (AQDEDAGGAGDETSEGEDTTGSDETPSTGGGGDGGNEETITAGNEDCWSKR) are disordered. Residues 22 to 41 (QDEDAGGAGDETSEGEDTTG) show a composition bias toward acidic residues. 3 cysteine pairs are disulfide-bonded: C67–C145, C92–C117, and C96–C105.

In terms of processing, the N-terminus is blocked. Expressed by salivary glands.

It is found in the secreted. In terms of biological role, inhibits collagen-stimulated platelet aggregation (IC(50)=60 nM), dense granule release and serotonin release. Does not inhibit platelet aggregation induced by ADP, arachidonic acid, and thrombin. The polypeptide is Leech anti-platelet protein (Haementeria officinalis (Mexican leech)).